We begin with the raw amino-acid sequence, 87 residues long: Acyl-CoA-binding protein (87 aa).

The region spanning 2–87 is the ACB domain; that stretch reads VSQLFEEKAK…VDQLIAKYSS (86 aa). An acyl-CoA contacts are provided by residues 29–33, Lys51, and Lys55; that span reads YALYK. A Glycyl lysine isopeptide (Lys-Gly) (interchain with G-Cter in ubiquitin) cross-link involves residue Lys51. Residue Lys72 forms a Glycyl lysine isopeptide (Lys-Gly) (interchain with G-Cter in ubiquitin) linkage. Tyr74 is an an acyl-CoA binding site.

This sequence belongs to the ACBP family.

Functionally, binds medium- and long-chain acyl-CoA esters with very high affinity and may function as an intracellular carrier of acyl-CoA esters. Enhances the in vitro activity of the ceramide synthase complex. This Saccharomyces cerevisiae (strain ATCC 204508 / S288c) (Baker's yeast) protein is Acyl-CoA-binding protein (ACB1).